An 88-amino-acid polypeptide reads, in one-letter code: MSKLFFVVFLCLIISVFAISPADIGCTDISQADFDEKNNNCIKCGEDGFGEEMVNRCRDKCFTDNFYQSCVDLLNKVYEEKDTPPVQE.

The N-terminal stretch at 1 to 18 (MSKLFFVVFLCLIISVFA) is a signal peptide.

The protein belongs to the arthropod CHH/MIH/GIH/VIH hormone family. Expressed by the venom gland.

Its subcellular location is the secreted. Functionally, may increase the toxicity of alpha-latrotoxin and/or other venom components. Is non-toxic to mice and to the cockroach Periplaneta americana. This is Alpha-latrotoxin-associated low molecular weight protein from Latrodectus tredecimguttatus (Mediterranean black widow spider).